Consider the following 64-residue polypeptide: DNA-directed RNA polymerase subunit Rpo10 (64 aa).

Zn(2+)-binding residues include cysteine 7, cysteine 10, cysteine 45, and cysteine 46.

The protein belongs to the archaeal Rpo10/eukaryotic RPB10 RNA polymerase subunit family. In terms of assembly, part of the RNA polymerase complex. Zn(2+) is required as a cofactor.

Its subcellular location is the cytoplasm. The catalysed reaction is RNA(n) + a ribonucleoside 5'-triphosphate = RNA(n+1) + diphosphate. Its function is as follows. DNA-dependent RNA polymerase (RNAP) catalyzes the transcription of DNA into RNA using the four ribonucleoside triphosphates as substrates. The protein is DNA-directed RNA polymerase subunit Rpo10 of Natronomonas pharaonis (strain ATCC 35678 / DSM 2160 / CIP 103997 / JCM 8858 / NBRC 14720 / NCIMB 2260 / Gabara) (Halobacterium pharaonis).